Consider the following 72-residue polypeptide: Small ribosomal subunit protein bS20 (72 aa).

The protein belongs to the bacterial ribosomal protein bS20 family.

In terms of biological role, binds directly to 16S ribosomal RNA. In Proteus mirabilis, this protein is Small ribosomal subunit protein bS20 (rpsT).